Reading from the N-terminus, the 420-residue chain is Glucose-1-phosphate adenylyltransferase (420 aa).

Alpha-D-glucose 1-phosphate-binding positions include Tyr-107, Gly-173, 188 to 189 (EK), and Ser-206.

The protein belongs to the bacterial/plant glucose-1-phosphate adenylyltransferase family. Homotetramer.

The enzyme catalyses alpha-D-glucose 1-phosphate + ATP + H(+) = ADP-alpha-D-glucose + diphosphate. It participates in glycan biosynthesis; glycogen biosynthesis. Functionally, involved in the biosynthesis of ADP-glucose, a building block required for the elongation reactions to produce glycogen. Catalyzes the reaction between ATP and alpha-D-glucose 1-phosphate (G1P) to produce pyrophosphate and ADP-Glc. The sequence is that of Glucose-1-phosphate adenylyltransferase from Shewanella oneidensis (strain ATCC 700550 / JCM 31522 / CIP 106686 / LMG 19005 / NCIMB 14063 / MR-1).